The chain runs to 455 residues: Ribulose bisphosphate carboxylase large chain (455 aa).

Lys5 carries the post-translational modification N6,N6,N6-trimethyllysine. The substrate site is built by Asn114 and Thr164. Lys166 functions as the Proton acceptor in the catalytic mechanism. Lys168 is a binding site for substrate. Mg(2+) contacts are provided by Lys192, Asp194, and Glu195. Lys192 is subject to N6-carboxylysine. Residue His285 is the Proton acceptor of the active site. Substrate contacts are provided by Arg286, His318, and Ser370.

It belongs to the RuBisCO large chain family. Type I subfamily. As to quaternary structure, heterohexadecamer of 8 large chains and 8 small chains; disulfide-linked. The disulfide link is formed within the large subunit homodimers. Mg(2+) serves as cofactor. Post-translationally, the disulfide bond which can form in the large chain dimeric partners within the hexadecamer appears to be associated with oxidative stress and protein turnover.

The protein localises to the plastid. Its subcellular location is the chloroplast. The enzyme catalyses 2 (2R)-3-phosphoglycerate + 2 H(+) = D-ribulose 1,5-bisphosphate + CO2 + H2O. The catalysed reaction is D-ribulose 1,5-bisphosphate + O2 = 2-phosphoglycolate + (2R)-3-phosphoglycerate + 2 H(+). Functionally, ruBisCO catalyzes two reactions: the carboxylation of D-ribulose 1,5-bisphosphate, the primary event in carbon dioxide fixation, as well as the oxidative fragmentation of the pentose substrate in the photorespiration process. Both reactions occur simultaneously and in competition at the same active site. This is Ribulose bisphosphate carboxylase large chain from Lupinus microcarpus var. densiflorus (Whitewhorl lupine).